A 184-amino-acid polypeptide reads, in one-letter code: Photosystem I assembly protein Ycf4 (184 aa).

2 helical membrane passes run 22–42 (FGWACILFLGSLGFLVVGASS) and 57–77 (IVFFPQGIVMSFYGIAGLFIS).

It belongs to the Ycf4 family.

It is found in the plastid. The protein localises to the chloroplast thylakoid membrane. In terms of biological role, seems to be required for the assembly of the photosystem I complex. In Acorus calamus (Sweet flag), this protein is Photosystem I assembly protein Ycf4.